Reading from the N-terminus, the 1408-residue chain is DNA-directed RNA polymerase subunit beta' (1408 aa).

Zn(2+) contacts are provided by Cys70, Cys72, Cys85, and Cys88. The Mg(2+) site is built by Asp458, Asp460, and Asp462. Zn(2+) is bound by residues Cys813, Cys887, Cys894, and Cys897. The segment at 1387 to 1408 (AELEAATATAPADAGGDSPATE) is disordered. Positions 1389 to 1408 (LEAATATAPADAGGDSPATE) are enriched in low complexity.

Belongs to the RNA polymerase beta' chain family. In terms of assembly, the RNAP catalytic core consists of 2 alpha, 1 beta, 1 beta' and 1 omega subunit. When a sigma factor is associated with the core the holoenzyme is formed, which can initiate transcription. Requires Mg(2+) as cofactor. It depends on Zn(2+) as a cofactor.

It carries out the reaction RNA(n) + a ribonucleoside 5'-triphosphate = RNA(n+1) + diphosphate. Functionally, DNA-dependent RNA polymerase catalyzes the transcription of DNA into RNA using the four ribonucleoside triphosphates as substrates. This chain is DNA-directed RNA polymerase subunit beta', found in Polaromonas sp. (strain JS666 / ATCC BAA-500).